An 856-amino-acid polypeptide reads, in one-letter code: Envelope glycoprotein gp160 (856 aa).

A signal peptide spans 1–31 (MKVKGIQGNWQNWWKWGTLILGLVIICSAAE). At 32–684 (NLWVTVYYGV…ISNWLWYIKI (653 aa)) the chain is on the extracellular side. A disulfide bridge connects residues cysteine 53 and cysteine 73. Asparagine 87, asparagine 132, asparagine 138, asparagine 152, asparagine 156, asparagine 183, and asparagine 198 each carry an N-linked (GlcNAc...) asparagine; by host glycan. 5 disulfides stabilise this stretch: cysteine 118–cysteine 206, cysteine 125–cysteine 197, cysteine 130–cysteine 153, cysteine 219–cysteine 248, and cysteine 229–cysteine 240. The interval 130-152 (CHNITIKDNNTNVDTEMKEEIKN) is V1. Residues 153-197 (CSYNMTTELRDKQRKIYSLFYRLDIVPIGGNSSNGDSSKYRLINC) form a V2 region. Asparagine 242, asparagine 263, asparagine 277, asparagine 294, asparagine 302, asparagine 332, asparagine 339, asparagine 355, and asparagine 364 each carry an N-linked (GlcNAc...) asparagine; by host glycan. The V3 stretch occupies residues 297–330 (CMRPNNNTRKSISIGPGRAFFATGDIIGDIRQAH). An intrachain disulfide couples cysteine 297 to cysteine 331. Positions 365 to 375 (SSGGDVEITTH) are CD4-binding loop. Disulfide bonds link cysteine 379–cysteine 445 and cysteine 386–cysteine 418. The tract at residues 386–418 (CNTSGLFNGTWLNGTSNNTWKIDTVNDTIILPC) is V4. N-linked (GlcNAc...) asparagine; by host glycans are attached at residues asparagine 387, asparagine 393, asparagine 398, asparagine 402, asparagine 411, asparagine 448, asparagine 461, asparagine 462, and asparagine 465. 2 V5 regions span residues 461 to 471 (NNTSNETFRPG) and 463 to 471 (TSNETFRPG). Positions 512–532 (AIGMGAFFLGFLGAAGSTMGA) are fusion peptide. Positions 574–592 (KQLQARILAVERYLKDQQL) are immunosuppression. Cysteines 598 and 604 form a disulfide. N-linked (GlcNAc...) asparagine; by host glycans are attached at residues asparagine 611, asparagine 616, and asparagine 637. Residues 633 to 667 (KEVSNYTQVIYNLIEESQTQQEINERDLLALDKWA) are a coiled coil. The segment at 662–683 (ALDKWANLWNWFDISNWLWYIK) is MPER; binding to GalCer. A helical transmembrane segment spans residues 685-705 (FIMIVGGLIGLRIVFAVLSII). Residues 706–856 (NRVRQGYSPL…IRQGLERALL (151 aa)) lie on the Cytoplasmic side of the membrane. Positions 712–715 (YSPL) match the YXXL motif; contains endocytosis signal motif. The disordered stretch occupies residues 720-742 (LTHHQREPDRPERIEEGGGEQDR). The span at 723–742 (HQREPDRPERIEEGGGEQDR) shows a compositional bias: basic and acidic residues. Cysteine 764 carries the S-palmitoyl cysteine; by host lipid modification. The Di-leucine internalization motif motif lies at 855 to 856 (LL).

The protein belongs to the HIV-1 env protein family. In terms of assembly, the mature envelope protein (Env) consists of a homotrimer of non-covalently associated gp120-gp41 heterodimers. The resulting complex protrudes from the virus surface as a spike. There seems to be as few as 10 spikes on the average virion. Interacts with host CD4, CCR5 and CXCR4. Gp120 also interacts with the C-type lectins CD209/DC-SIGN and CLEC4M/DC-SIGNR (collectively referred to as DC-SIGN(R)). Gp120 and gp41 interact with GalCer. Gp120 interacts with host ITGA4/ITGB7 complex; on CD4+ T-cells, this interaction results in rapid activation of integrin ITGAL/LFA-1, which facilitates efficient cell-to-cell spreading of HIV-1. Gp120 interacts with cell-associated heparan sulfate; this interaction increases virus infectivity on permissive cells and may be involved in infection of CD4- cells. As to quaternary structure, the mature envelope protein (Env) consists of a homotrimer of non-covalently associated gp120-gp41 heterodimers. The resulting complex protrudes from the virus surface as a spike. There seems to be as few as 10 spikes on the average virion. In terms of processing, highly glycosylated by host. The high number of glycan on the protein is reffered to as 'glycan shield' because it contributes to hide protein sequence from adaptive immune system. Post-translationally, palmitoylation of the transmembrane protein and of Env polyprotein (prior to its proteolytic cleavage) is essential for their association with host cell membrane lipid rafts. Palmitoylation is therefore required for envelope trafficking to classical lipid rafts, but not for viral replication. Specific enzymatic cleavages in vivo yield mature proteins. Envelope glycoproteins are synthesized as an inactive precursor that is heavily N-glycosylated and processed likely by host cell furin in the Golgi to yield the mature SU and TM proteins. The cleavage site between SU and TM requires the minimal sequence [KR]-X-[KR]-R. About 2 of the 9 disulfide bonds of gp41 are reduced by P4HB/PDI, following binding to CD4 receptor.

Its subcellular location is the virion membrane. The protein localises to the host cell membrane. The protein resides in the host endosome membrane. Its function is as follows. Oligomerizes in the host endoplasmic reticulum into predominantly trimers. In a second time, gp160 transits in the host Golgi, where glycosylation is completed. The precursor is then proteolytically cleaved in the trans-Golgi and thereby activated by cellular furin or furin-like proteases to produce gp120 and gp41. Attaches the virus to the host lymphoid cell by binding to the primary receptor CD4. This interaction induces a structural rearrangement creating a high affinity binding site for a chemokine coreceptor like CXCR4 and/or CCR5. Acts as a ligand for CD209/DC-SIGN and CLEC4M/DC-SIGNR, which are respectively found on dendritic cells (DCs), and on endothelial cells of liver sinusoids and lymph node sinuses. These interactions allow capture of viral particles at mucosal surfaces by these cells and subsequent transmission to permissive cells. HIV subverts the migration properties of dendritic cells to gain access to CD4+ T-cells in lymph nodes. Virus transmission to permissive T-cells occurs either in trans (without DCs infection, through viral capture and transmission), or in cis (following DCs productive infection, through the usual CD4-gp120 interaction), thereby inducing a robust infection. In trans infection, bound virions remain infectious over days and it is proposed that they are not degraded, but protected in non-lysosomal acidic organelles within the DCs close to the cell membrane thus contributing to the viral infectious potential during DCs' migration from the periphery to the lymphoid tissues. On arrival at lymphoid tissues, intact virions recycle back to DCs' cell surface allowing virus transmission to CD4+ T-cells. In terms of biological role, acts as a class I viral fusion protein. Under the current model, the protein has at least 3 conformational states: pre-fusion native state, pre-hairpin intermediate state, and post-fusion hairpin state. During fusion of viral and target intracellular membranes, the coiled coil regions (heptad repeats) assume a trimer-of-hairpins structure, positioning the fusion peptide in close proximity to the C-terminal region of the ectodomain. The formation of this structure appears to drive apposition and subsequent fusion of viral and target cell membranes. Complete fusion occurs in host cell endosomes and is dynamin-dependent, however some lipid transfer might occur at the plasma membrane. The virus undergoes clathrin-dependent internalization long before endosomal fusion, thus minimizing the surface exposure of conserved viral epitopes during fusion and reducing the efficacy of inhibitors targeting these epitopes. Membranes fusion leads to delivery of the nucleocapsid into the cytoplasm. In Homo sapiens (Human), this protein is Envelope glycoprotein gp160.